The chain runs to 275 residues: 4-hydroxy-tetrahydrodipicolinate reductase (275 aa).

NAD(+) contacts are provided by residues Gly-13–Met-18 and Gly-108–Thr-110. The Proton donor/acceptor role is filled by His-164. Residue His-165 coordinates (S)-2,3,4,5-tetrahydrodipicolinate. Catalysis depends on Lys-168, which acts as the Proton donor. Residue Gly-174 to Thr-175 coordinates (S)-2,3,4,5-tetrahydrodipicolinate.

The protein belongs to the DapB family.

The protein localises to the cytoplasm. The catalysed reaction is (S)-2,3,4,5-tetrahydrodipicolinate + NAD(+) + H2O = (2S,4S)-4-hydroxy-2,3,4,5-tetrahydrodipicolinate + NADH + H(+). It catalyses the reaction (S)-2,3,4,5-tetrahydrodipicolinate + NADP(+) + H2O = (2S,4S)-4-hydroxy-2,3,4,5-tetrahydrodipicolinate + NADPH + H(+). Its pathway is amino-acid biosynthesis; L-lysine biosynthesis via DAP pathway; (S)-tetrahydrodipicolinate from L-aspartate: step 4/4. Its function is as follows. Catalyzes the conversion of 4-hydroxy-tetrahydrodipicolinate (HTPA) to tetrahydrodipicolinate. The polypeptide is 4-hydroxy-tetrahydrodipicolinate reductase (Rippkaea orientalis (strain PCC 8801 / RF-1) (Cyanothece sp. (strain PCC 8801))).